The chain runs to 122 residues: Truncated CrmB protein (122 aa).

In terms of biological role, the protein is truncated in this strain and presumably inactive. It has similarities with variola virus CrmB, but the product is inactivated due to several premature stop codons. The sequence is that of Truncated CrmB protein (OPG002) from Bos taurus (Bovine).